We begin with the raw amino-acid sequence, 980 residues long: Exportin-T (980 aa).

This sequence belongs to the exportin family. In terms of tissue distribution, expressed in roots, stems, leaves, flowers and embryos.

It localises to the nucleus. The protein resides in the cytoplasm. In terms of biological role, probable tRNA nucleus export receptor which regulates tRNA processing and facilitates tRNA translocation across the nuclear pore complex. Is required for correct leaf initiation at different developmental stages and may play a role in floral patterning. In Oryza sativa subsp. japonica (Rice), this protein is Exportin-T.